Consider the following 103-residue polypeptide: uncharacterized protein (103 aa).

This is an uncharacterized protein from Homo sapiens (Human).